The primary structure comprises 143 residues: Large ribosomal subunit protein uL11 (143 aa).

Belongs to the universal ribosomal protein uL11 family. Part of the ribosomal stalk of the 50S ribosomal subunit. Interacts with L10 and the large rRNA to form the base of the stalk. L10 forms an elongated spine to which L12 dimers bind in a sequential fashion forming a multimeric L10(L12)X complex. Post-translationally, one or more lysine residues are methylated.

Functionally, forms part of the ribosomal stalk which helps the ribosome interact with GTP-bound translation factors. This is Large ribosomal subunit protein uL11 from Paenarthrobacter aurescens (strain TC1).